Here is a 307-residue protein sequence, read N- to C-terminus: Transcription initiation factor IIB 5 (307 aa).

The TFIIB-type zinc finger occupies 19–47 (TTEPCPECGGPVRTNSAETVCADCGLIID). Zn(2+) contacts are provided by Cys-23, Cys-26, Cys-39, and Cys-42. Basic and acidic residues-rich tracts occupy residues 54 to 66 (GPEWHRDDADTAK) and 107 to 121 (MRREQSRGRWRSTKE). The disordered stretch occupies residues 54-121 (GPEWHRDDAD…SRGRWRSTKE (68 aa)). Tandem repeats lie at residues 129 to 212 (TEIR…NEEL) and 223 to 304 (QFVP…RLLS).

Belongs to the TFIIB family.

Stabilizes TBP binding to an archaeal box-A promoter. Also responsible for recruiting RNA polymerase II to the pre-initiation complex (DNA-TBP-TFIIB). The chain is Transcription initiation factor IIB 5 from Halobacterium salinarum (strain ATCC 700922 / JCM 11081 / NRC-1) (Halobacterium halobium).